Reading from the N-terminus, the 137-residue chain is Large-conductance mechanosensitive channel (137 aa).

Helical transmembrane passes span 15–35 (IDLA…NSIV), 38–58 (ILMP…MFIQ), and 80–100 (GNFI…FLFV).

This sequence belongs to the MscL family. As to quaternary structure, homopentamer.

It is found in the cell inner membrane. In terms of biological role, channel that opens in response to stretch forces in the membrane lipid bilayer. May participate in the regulation of osmotic pressure changes within the cell. This Bartonella quintana (strain Toulouse) (Rochalimaea quintana) protein is Large-conductance mechanosensitive channel.